Consider the following 137-residue polypeptide: Small ribosomal subunit protein uS12 (137 aa).

Residues 1–28 (MPTINQLVRKPRKSKAKKSDSPALNKGF) are disordered. Asp-102 is subject to 3-methylthioaspartic acid.

The protein belongs to the universal ribosomal protein uS12 family. As to quaternary structure, part of the 30S ribosomal subunit. Contacts proteins S8 and S17. May interact with IF1 in the 30S initiation complex.

Functionally, with S4 and S5 plays an important role in translational accuracy. In terms of biological role, interacts with and stabilizes bases of the 16S rRNA that are involved in tRNA selection in the A site and with the mRNA backbone. Located at the interface of the 30S and 50S subunits, it traverses the body of the 30S subunit contacting proteins on the other side and probably holding the rRNA structure together. The combined cluster of proteins S8, S12 and S17 appears to hold together the shoulder and platform of the 30S subunit. This chain is Small ribosomal subunit protein uS12, found in Staphylococcus carnosus (strain TM300).